A 747-amino-acid polypeptide reads, in one-letter code: Phosphoribosylformylglycinamidine synthase subunit PurL (747 aa).

The active site involves histidine 46. Positions 49 and 88 each coordinate ATP. Glutamate 90 lines the Mg(2+) pocket. Substrate contacts are provided by residues serine 91 to histidine 94 and arginine 113. The active-site Proton acceptor is histidine 92. Aspartate 114 is a binding site for Mg(2+). Substrate is bound at residue glutamine 237. Aspartate 265 is a binding site for Mg(2+). Glutamate 309–glutamine 311 is a binding site for substrate. Residues aspartate 493 and glycine 530 each contribute to the ATP site. Position 531 (asparagine 531) interacts with Mg(2+). Serine 533 lines the substrate pocket.

The protein belongs to the FGAMS family. Monomer. Part of the FGAM synthase complex composed of 1 PurL, 1 PurQ and 2 PurS subunits.

The protein resides in the cytoplasm. The enzyme catalyses N(2)-formyl-N(1)-(5-phospho-beta-D-ribosyl)glycinamide + L-glutamine + ATP + H2O = 2-formamido-N(1)-(5-O-phospho-beta-D-ribosyl)acetamidine + L-glutamate + ADP + phosphate + H(+). The protein operates within purine metabolism; IMP biosynthesis via de novo pathway; 5-amino-1-(5-phospho-D-ribosyl)imidazole from N(2)-formyl-N(1)-(5-phospho-D-ribosyl)glycinamide: step 1/2. Part of the phosphoribosylformylglycinamidine synthase complex involved in the purines biosynthetic pathway. Catalyzes the ATP-dependent conversion of formylglycinamide ribonucleotide (FGAR) and glutamine to yield formylglycinamidine ribonucleotide (FGAM) and glutamate. The FGAM synthase complex is composed of three subunits. PurQ produces an ammonia molecule by converting glutamine to glutamate. PurL transfers the ammonia molecule to FGAR to form FGAM in an ATP-dependent manner. PurS interacts with PurQ and PurL and is thought to assist in the transfer of the ammonia molecule from PurQ to PurL. The chain is Phosphoribosylformylglycinamidine synthase subunit PurL from Deinococcus radiodurans (strain ATCC 13939 / DSM 20539 / JCM 16871 / CCUG 27074 / LMG 4051 / NBRC 15346 / NCIMB 9279 / VKM B-1422 / R1).